A 341-amino-acid polypeptide reads, in one-letter code: HTH-type transcriptional repressor PurR (341 aa).

The region spanning 2–56 is the HTH lacI-type domain; that stretch reads ATIKDVAKRANVSTTTVSHVINKTRFVAEETRNAVWAAIKELHYSPSAVARSLKV. The H-T-H motif DNA-binding region spans 4-23; that stretch reads IKDVAKRANVSTTTVSHVIN. The DNA-binding element occupies 48 to 56; that stretch reads SAVARSLKV. Hypoxanthine is bound by residues Tyr-73, Arg-190, Thr-192, Phe-221, and Asp-275.

In terms of assembly, homodimer.

Its pathway is purine metabolism; purine nucleotide biosynthesis [regulation]. Functionally, is the main repressor of the genes involved in the de novo synthesis of purine nucleotides, regulating purB, purC, purEK, purF, purHD, purL, purMN and guaBA expression. PurR is allosterically activated to bind its cognate DNA by binding the purine corepressors, hypoxanthine or guanine, thereby effecting transcription repression. This is HTH-type transcriptional repressor PurR from Klebsiella pneumoniae subsp. pneumoniae (strain ATCC 700721 / MGH 78578).